We begin with the raw amino-acid sequence, 237 residues long: ATP synthase subunit a (237 aa).

The next 5 membrane-spanning stretches (helical) occupy residues 18-38 (LTLL…VYWA), 77-97 (SLFL…GLMA), 114-134 (NIAF…VEGI), 167-187 (LALR…LLVT), and 208-230 (AFSV…MYLG).

It belongs to the ATPase A chain family. F-type ATPases have 2 components, CF(1) - the catalytic core - and CF(0) - the membrane proton channel. CF(1) has five subunits: alpha(3), beta(3), gamma(1), delta(1), epsilon(1). CF(0) has three main subunits: a(1), b(2) and c(9-12). The alpha and beta chains form an alternating ring which encloses part of the gamma chain. CF(1) is attached to CF(0) by a central stalk formed by the gamma and epsilon chains, while a peripheral stalk is formed by the delta and b chains.

It localises to the cell membrane. Key component of the proton channel; it plays a direct role in the translocation of protons across the membrane. The sequence is that of ATP synthase subunit a from Streptococcus gordonii (strain Challis / ATCC 35105 / BCRC 15272 / CH1 / DL1 / V288).